Reading from the N-terminus, the 414-residue chain is Probable 26S proteasome regulatory subunit 6B (414 aa).

202–209 (GPPGCGKT) is an ATP binding site.

It belongs to the AAA ATPase family.

Its subcellular location is the cytoplasm. The protein resides in the nucleus. In terms of biological role, the 26S proteasome is involved in the ATP-dependent degradation of ubiquitinated proteins. The regulatory (or ATPase) complex confers ATP dependency and substrate specificity to the 26S complex. This chain is Probable 26S proteasome regulatory subunit 6B (rpt-3), found in Caenorhabditis elegans.